A 388-amino-acid polypeptide reads, in one-letter code: Chorismate synthase (388 aa).

NADP(+) contacts are provided by arginine 39 and arginine 45. FMN is bound by residues 130 to 132, 251 to 252, glycine 296, 311 to 315, and arginine 337; these read RSS, NA, and KPIPT.

The protein belongs to the chorismate synthase family. As to quaternary structure, homotetramer. The cofactor is FMNH2.

It carries out the reaction 5-O-(1-carboxyvinyl)-3-phosphoshikimate = chorismate + phosphate. It functions in the pathway metabolic intermediate biosynthesis; chorismate biosynthesis; chorismate from D-erythrose 4-phosphate and phosphoenolpyruvate: step 7/7. Catalyzes the anti-1,4-elimination of the C-3 phosphate and the C-6 proR hydrogen from 5-enolpyruvylshikimate-3-phosphate (EPSP) to yield chorismate, which is the branch point compound that serves as the starting substrate for the three terminal pathways of aromatic amino acid biosynthesis. This reaction introduces a second double bond into the aromatic ring system. The polypeptide is Chorismate synthase (Streptococcus mutans serotype c (strain ATCC 700610 / UA159)).